The primary structure comprises 91 residues: uncharacterized protein (91 aa).

Transmembrane regions (helical) follow at residues 22 to 42 (WPVI…AFVV) and 53 to 73 (VAGL…LAAA).

It localises to the cell membrane. This is an uncharacterized protein from Mycobacterium bovis (strain ATCC BAA-935 / AF2122/97).